The chain runs to 172 residues: Adenine phosphoribosyltransferase (172 aa).

Belongs to the purine/pyrimidine phosphoribosyltransferase family. Homodimer.

It is found in the cytoplasm. The enzyme catalyses AMP + diphosphate = 5-phospho-alpha-D-ribose 1-diphosphate + adenine. Its pathway is purine metabolism; AMP biosynthesis via salvage pathway; AMP from adenine: step 1/1. Its function is as follows. Catalyzes a salvage reaction resulting in the formation of AMP, that is energically less costly than de novo synthesis. The polypeptide is Adenine phosphoribosyltransferase (Staphylococcus haemolyticus (strain JCSC1435)).